The following is a 729-amino-acid chain: Fatty acid oxidation complex subunit alpha (729 aa).

Positions 1–189 are enoyl-CoA hydratase/isomerase; it reads MLYKGDTLYL…KIGLVDGVVK (189 aa). Residue Asp296 coordinates substrate. The interval 311-729 is 3-hydroxyacyl-CoA dehydrogenase; the sequence is ETPKQAAVLG…ARPVGDLKTA (419 aa). Residues Met324, Asp343, 400–402, Lys407, and Ser429 contribute to the NAD(+) site; that span reads VVE. His450 serves as the catalytic For 3-hydroxyacyl-CoA dehydrogenase activity. Asn453 contacts NAD(+). Asn500 and Tyr660 together coordinate substrate. The disordered stretch occupies residues 708–729; that stretch reads RHNEPYYPPVEPARPVGDLKTA.

In the N-terminal section; belongs to the enoyl-CoA hydratase/isomerase family. This sequence in the C-terminal section; belongs to the 3-hydroxyacyl-CoA dehydrogenase family. Heterotetramer of two alpha chains (FadB) and two beta chains (FadA).

The catalysed reaction is a (3S)-3-hydroxyacyl-CoA + NAD(+) = a 3-oxoacyl-CoA + NADH + H(+). It catalyses the reaction a (3S)-3-hydroxyacyl-CoA = a (2E)-enoyl-CoA + H2O. It carries out the reaction a 4-saturated-(3S)-3-hydroxyacyl-CoA = a (3E)-enoyl-CoA + H2O. The enzyme catalyses (3S)-3-hydroxybutanoyl-CoA = (3R)-3-hydroxybutanoyl-CoA. The catalysed reaction is a (3Z)-enoyl-CoA = a 4-saturated (2E)-enoyl-CoA. It catalyses the reaction a (3E)-enoyl-CoA = a 4-saturated (2E)-enoyl-CoA. The protein operates within lipid metabolism; fatty acid beta-oxidation. In terms of biological role, involved in the aerobic and anaerobic degradation of long-chain fatty acids via beta-oxidation cycle. Catalyzes the formation of 3-oxoacyl-CoA from enoyl-CoA via L-3-hydroxyacyl-CoA. It can also use D-3-hydroxyacyl-CoA and cis-3-enoyl-CoA as substrate. This Citrobacter koseri (strain ATCC BAA-895 / CDC 4225-83 / SGSC4696) protein is Fatty acid oxidation complex subunit alpha.